The sequence spans 1288 residues: Contactin-associated protein-like 3 (1288 aa).

Residues 1–25 (MASVAWAVLKVLLLLPTQTWSPVGA) form the signal peptide. The Extracellular portion of the chain corresponds to 26–1245 (GNPPDCDAPL…LVNADRRDSA (1220 aa)). An F5/8 type C domain is found at 31-177 (CDAPLASALP…IGMRIEVYGC (147 aa)). Residues Cys-31 and Cys-177 are joined by a disulfide bond. 2 Laminin G-like domains span residues 183-364 (VVYF…SFSC) and 370-545 (VPVT…IDSC). Residues Asn-285, Asn-359, Asn-441, and Asn-497 are each glycosylated (N-linked (GlcNAc...) asparagine). Residues Cys-332 and Cys-364 are joined by a disulfide bond. Cystine bridges form between Cys-513-Cys-545, Cys-551-Cys-562, Cys-556-Cys-571, and Cys-573-Cys-583. Residues 551 to 583 (CLPSYCEHGGECSQSWDTFSCDCLGTGYTGETC) enclose the EGF-like 1 domain. The 209-residue stretch at 584–792 (HSSLYEQSCE…LLCRGDQSFW (209 aa)) folds into the Fibrinogen C-terminal domain. 2 N-linked (GlcNAc...) asparagine glycosylation sites follow: Asn-623 and Asn-706. Residues 793-958 (NSASFNTETS…TVTPGVEPGC (166 aa)) enclose the Laminin G-like 3 domain. Intrachain disulfides connect Cys-931–Cys-958, Cys-962–Cys-975, Cys-969–Cys-984, and Cys-986–Cys-996. The EGF-like 2 domain occupies 962-996 (CSTYGHLCRNGGRCREKRRGVTCDCAFSAYDGPFC). Residues 1015–1203 (QEHYTLSENS…RGHVAPMARC (189 aa)) enclose the Laminin G-like 4 domain. Residues Asn-1023, Asn-1073, and Asn-1120 are each glycosylated (N-linked (GlcNAc...) asparagine). Residues Cys-1167 and Cys-1203 are joined by a disulfide bond. Positions 1215-1236 (ELAPRLAGGAGRSGPADEGEPL) are disordered. Residues 1246–1266 (VIGGVIAVVIFILLCITAIAI) form a helical membrane-spanning segment. Topologically, residues 1267–1288 (RIYQQRKLRKENESKVSKKEEC) are cytoplasmic.

Belongs to the neurexin family.

Its subcellular location is the cell membrane. It localises to the secreted. In Homo sapiens (Human), this protein is Contactin-associated protein-like 3 (CNTNAP3).